A 564-amino-acid polypeptide reads, in one-letter code: Diacylglycerol kinase epsilon (564 aa).

A helical membrane pass occupies residues 20-40 (LVLWTLCSVLLPVFITLWCSL). 2 consecutive Phorbol-ester/DAG-type zinc fingers follow at residues 57–106 (KHCW…RFPC) and 121–174 (PHHW…SEKC). The 142-residue stretch at 212 to 353 (KQWTPLIILA…LDRWKVQVTN (142 aa)) folds into the DAGKc domain.

The protein belongs to the eukaryotic diacylglycerol kinase family. As to expression, highly expressed in brain and heart. In brain, highly expressed in Purkinje cells of the cerebellum, pyramidal cells of the hippocampus, mitral cells of the olfactory bulb, and neurons of the substantia nigra. Lower expression in neurons of the thalamus, superior olive, and lateral reticular nucleus is also detected. Expressed in platelets.

The protein localises to the membrane. It localises to the cytoplasm. It catalyses the reaction a 1,2-diacyl-sn-glycerol + ATP = a 1,2-diacyl-sn-glycero-3-phosphate + ADP + H(+). The enzyme catalyses 1-hexadecanoyl-2-(5Z,8Z,11Z,14Z-eicosatetraenoyl)-sn-glycerol + ATP = 1-hexadecanoyl-2-(5Z,8Z,11Z,14Z-eicosatetraenoyl)-sn-glycero-3-phosphate + ADP + H(+). It carries out the reaction 1-octadecanoyl-2-(5Z,8Z,11Z,14Z-eicosatetraenoyl)-sn-glycerol + ATP = 1-octadecanoyl-2-(5Z,8Z,11Z,14Z-eicosatetraenoyl)-sn-glycero-3-phosphate + ADP + H(+). The catalysed reaction is 1-eicosanoyl-2-(5Z,8Z,11Z,14Z)-eicosatetraenoyl-sn-glycerol + ATP = 1-eicosanoyl-2-(5Z,8Z,11Z,14Z)-eicosatetraenoyl-sn-glycero-3-phosphate + ADP + H(+). It catalyses the reaction 1,2-di-(5Z,8Z,11Z,14Z)-eicosatetraenoyl-sn-glycerol + ATP = 1,2-di-(5Z,8Z,11Z,14Z)-eicosatetraenoyl-sn-glycero-3-phosphate + ADP + H(+). The enzyme catalyses 1-octadecanoyl-2-(9Z,12Z)-octadecadienoyl-sn-glycerol + ATP = 1-octadecanoyl-2-(9Z,12Z-octadecadienoyl)-sn-glycero-3-phosphate + ADP + H(+). It carries out the reaction 1,2-di-(9Z,12Z-octadecadienoyl)-sn-glycerol + ATP = 1,2-di-(9Z,12Z-octadecadienoyl)-sn-glycero-3-phosphate + ADP + H(+). The catalysed reaction is 1,2-di-(9Z-octadecenoyl)-sn-glycerol + ATP = 1,2-di-(9Z-octadecenoyl)-sn-glycero-3-phosphate + ADP + H(+). It participates in lipid metabolism; glycerolipid metabolism. Functionally, membrane-bound diacylglycerol kinase that converts diacylglycerol/DAG into phosphatidic acid/phosphatidate/PA and regulates the respective levels of these two bioactive lipids. Thereby, acts as a central switch between the signaling pathways activated by these second messengers with different cellular targets and opposite effects in numerous biological processes. Also plays an important role in the biosynthesis of complex lipids. Displays specificity for diacylglycerol substrates with an arachidonoyl acyl chain at the sn-2 position, with the highest activity toward 1-octadecanoyl-2-(5Z,8Z,11Z,14Z-eicosatetraenoyl)-sn-glycerol the main diacylglycerol intermediate within the phosphatidylinositol turnover cycle. Can also phosphorylate diacylglycerol substrates with a linoleoyl acyl chain at the sn-2 position but much less efficiently. This chain is Diacylglycerol kinase epsilon (Dgke), found in Mus musculus (Mouse).